The chain runs to 199 residues: Cytochrome c oxidase subunit 2 (199 aa).

A helical membrane pass occupies residues 1–13 (AICSLVLYLLTLM). At 14–26 (LMEKLSSNTVDAQ) the chain is on the mitochondrial matrix side. A helical transmembrane segment spans residues 27–54 (EVELIWTILPAIVLILLALPSLQILYMM). The Mitochondrial intermembrane portion of the chain corresponds to 55–199 (DEIDEPDLTL…SSLLSASSSL (145 aa)). Positions 128, 163, 165, 167, 171, and 174 each coordinate Cu cation. A Mg(2+)-binding site is contributed by glutamate 165.

This sequence belongs to the cytochrome c oxidase subunit 2 family. As to quaternary structure, component of the cytochrome c oxidase (complex IV, CIV), a multisubunit enzyme composed of 14 subunits. The complex is composed of a catalytic core of 3 subunits MT-CO1, MT-CO2 and MT-CO3, encoded in the mitochondrial DNA, and 11 supernumerary subunits COX4I, COX5A, COX5B, COX6A, COX6B, COX6C, COX7A, COX7B, COX7C, COX8 and NDUFA4, which are encoded in the nuclear genome. The complex exists as a monomer or a dimer and forms supercomplexes (SCs) in the inner mitochondrial membrane with NADH-ubiquinone oxidoreductase (complex I, CI) and ubiquinol-cytochrome c oxidoreductase (cytochrome b-c1 complex, complex III, CIII), resulting in different assemblies (supercomplex SCI(1)III(2)IV(1) and megacomplex MCI(2)III(2)IV(2)). Found in a complex with TMEM177, COA6, COX18, COX20, SCO1 and SCO2. Interacts with TMEM177 in a COX20-dependent manner. Interacts with COX20. Interacts with COX16. Cu cation serves as cofactor.

The protein resides in the mitochondrion inner membrane. It catalyses the reaction 4 Fe(II)-[cytochrome c] + O2 + 8 H(+)(in) = 4 Fe(III)-[cytochrome c] + 2 H2O + 4 H(+)(out). Its function is as follows. Component of the cytochrome c oxidase, the last enzyme in the mitochondrial electron transport chain which drives oxidative phosphorylation. The respiratory chain contains 3 multisubunit complexes succinate dehydrogenase (complex II, CII), ubiquinol-cytochrome c oxidoreductase (cytochrome b-c1 complex, complex III, CIII) and cytochrome c oxidase (complex IV, CIV), that cooperate to transfer electrons derived from NADH and succinate to molecular oxygen, creating an electrochemical gradient over the inner membrane that drives transmembrane transport and the ATP synthase. Cytochrome c oxidase is the component of the respiratory chain that catalyzes the reduction of oxygen to water. Electrons originating from reduced cytochrome c in the intermembrane space (IMS) are transferred via the dinuclear copper A center (CU(A)) of subunit 2 and heme A of subunit 1 to the active site in subunit 1, a binuclear center (BNC) formed by heme A3 and copper B (CU(B)). The BNC reduces molecular oxygen to 2 water molecules using 4 electrons from cytochrome c in the IMS and 4 protons from the mitochondrial matrix. The protein is Cytochrome c oxidase subunit 2 (MT-CO2) of Dromaius novaehollandiae (Emu).